The chain runs to 514 residues: Anthranilate synthase component 1 (514 aa).

L-tryptophan contacts are provided by residues Thr-40 and 290–292 (PYM). 327-328 (GT) lines the chorismate pocket. Glu-360 is a binding site for Mg(2+). Residues Tyr-448, Arg-468, 482-484 (GAG), and Gly-484 contribute to the chorismate site. Glu-497 serves as a coordination point for Mg(2+).

The protein belongs to the anthranilate synthase component I family. Heterotetramer consisting of two non-identical subunits: a beta subunit (TrpG) and a large alpha subunit (TrpE). Mg(2+) is required as a cofactor.

The catalysed reaction is chorismate + L-glutamine = anthranilate + pyruvate + L-glutamate + H(+). It participates in amino-acid biosynthesis; L-tryptophan biosynthesis; L-tryptophan from chorismate: step 1/5. With respect to regulation, feedback inhibited by tryptophan. Its function is as follows. Part of a heterotetrameric complex that catalyzes the two-step biosynthesis of anthranilate, an intermediate in the biosynthesis of L-tryptophan. In the first step, the glutamine-binding beta subunit (TrpG) of anthranilate synthase (AS) provides the glutamine amidotransferase activity which generates ammonia as a substrate that, along with chorismate, is used in the second step, catalyzed by the large alpha subunit of AS (TrpE) to produce anthranilate. In the absence of TrpG, TrpE can synthesize anthranilate directly from chorismate and high concentrations of ammonia. In Buchnera aphidicola subsp. Rhopalosiphum padi, this protein is Anthranilate synthase component 1 (trpE).